The sequence spans 522 residues: tRNA-2-methylthio-N(6)-dimethylallyladenosine synthase (522 aa).

Positions 1–26 are enriched in low complexity; it reads MSLTIPSPASGTSTSATTDTAPAAAP. Positions 1 to 27 are disordered; it reads MSLTIPSPASGTSTSATTDTAPAAAPQ. Positions 28-143 constitute an MTTase N-terminal domain; the sequence is RTYQVRTFGC…LPALLDRARH (116 aa). [4Fe-4S] cluster is bound by residues Cys-37, Cys-72, Cys-106, Cys-180, Cys-184, and Cys-187. A Radical SAM core domain is found at 166–396; it reads RDSVYSGWVS…TALQDRIAAE (231 aa). The TRAM domain maps to 399–469; that stretch reads ARQLGRRVEV…AFHLVADPAS (71 aa). The tract at residues 481 to 522 is disordered; it reads GDAWDRSQADSCGAPVAGGGAGSNGGKGGVSLGMPALPVRRS. Residues 496–511 are compositionally biased toward gly residues; it reads VAGGGAGSNGGKGGVS.

Belongs to the methylthiotransferase family. MiaB subfamily. Monomer. [4Fe-4S] cluster is required as a cofactor.

It is found in the cytoplasm. It carries out the reaction N(6)-dimethylallyladenosine(37) in tRNA + (sulfur carrier)-SH + AH2 + 2 S-adenosyl-L-methionine = 2-methylsulfanyl-N(6)-dimethylallyladenosine(37) in tRNA + (sulfur carrier)-H + 5'-deoxyadenosine + L-methionine + A + S-adenosyl-L-homocysteine + 2 H(+). Catalyzes the methylthiolation of N6-(dimethylallyl)adenosine (i(6)A), leading to the formation of 2-methylthio-N6-(dimethylallyl)adenosine (ms(2)i(6)A) at position 37 in tRNAs that read codons beginning with uridine. This chain is tRNA-2-methylthio-N(6)-dimethylallyladenosine synthase, found in Arthrobacter sp. (strain FB24).